We begin with the raw amino-acid sequence, 1413 residues long: DNA-directed RNA polymerase subunit beta' (1413 aa).

Zn(2+)-binding residues include cysteine 70, cysteine 72, cysteine 85, and cysteine 88. 3 residues coordinate Mg(2+): aspartate 460, aspartate 462, and aspartate 464. Residues cysteine 814, cysteine 888, cysteine 895, and cysteine 898 each coordinate Zn(2+).

This sequence belongs to the RNA polymerase beta' chain family. In terms of assembly, the RNAP catalytic core consists of 2 alpha, 1 beta, 1 beta' and 1 omega subunit. When a sigma factor is associated with the core the holoenzyme is formed, which can initiate transcription. Mg(2+) serves as cofactor. Zn(2+) is required as a cofactor.

It catalyses the reaction RNA(n) + a ribonucleoside 5'-triphosphate = RNA(n+1) + diphosphate. DNA-dependent RNA polymerase catalyzes the transcription of DNA into RNA using the four ribonucleoside triphosphates as substrates. The polypeptide is DNA-directed RNA polymerase subunit beta' (Buchnera aphidicola subsp. Schizaphis graminum (strain Sg)).